A 143-amino-acid chain; its full sequence is Actin-depolymerizing factor 5 (143 aa).

The region spanning 11–143 is the ADF-H domain; that stretch reads GMNVKEECQR…GYDVIRGRAQ (133 aa).

It belongs to the actin-binding proteins ADF family.

Its function is as follows. Actin-depolymerizing protein. Severs actin filaments (F-actin) and binds to actin monomers. The chain is Actin-depolymerizing factor 5 (ADF5) from Oryza sativa subsp. japonica (Rice).